The chain runs to 113 residues: U11-theraphotoxin-Hhn1a (113 aa).

Positions 1–21 (MNTVRVTFLLVFVLAVSLGQA) are cleaved as a signal peptide. The propeptide occupies 22–74 (DKDENRMEMQEKTEQGKSYLDFAENLLLQKLEELEAKPLEEDSEESRNSRQKR). Over residues 57–69 (AKPLEEDSEESRN) the composition is skewed to basic and acidic residues. Positions 57–83 (AKPLEEDSEESRNSRQKRCIGEGVPCD) are disordered. Disulfide bonds link Cys-75–Cys-90, Cys-82–Cys-95, and Cys-89–Cys-110.

This sequence belongs to the neurotoxin 14 (magi-1) family. 01 (HNTX-16) subfamily. Expressed by the venom gland.

The protein localises to the secreted. Its function is as follows. Probable ion channel inhibitor. The sequence is that of U11-theraphotoxin-Hhn1a from Cyriopagopus hainanus (Chinese bird spider).